A 182-amino-acid chain; its full sequence is ATP synthase subunit b, chloroplastic (182 aa).

A helical transmembrane segment spans residues 33 to 51; the sequence is VLNIAILLSGVIYLGRNFL.

It belongs to the ATPase B chain family. In terms of assembly, F-type ATPases have 2 components, F(1) - the catalytic core - and F(0) - the membrane proton channel. F(1) has five subunits: alpha(3), beta(3), gamma(1), delta(1), epsilon(1). F(0) has four main subunits: a(1), b(1), b'(1) and c(10-14). The alpha and beta chains form an alternating ring which encloses part of the gamma chain. F(1) is attached to F(0) by a central stalk formed by the gamma and epsilon chains, while a peripheral stalk is formed by the delta, b and b' chains.

It localises to the plastid. The protein localises to the chloroplast thylakoid membrane. Its function is as follows. F(1)F(0) ATP synthase produces ATP from ADP in the presence of a proton or sodium gradient. F-type ATPases consist of two structural domains, F(1) containing the extramembraneous catalytic core and F(0) containing the membrane proton channel, linked together by a central stalk and a peripheral stalk. During catalysis, ATP synthesis in the catalytic domain of F(1) is coupled via a rotary mechanism of the central stalk subunits to proton translocation. Functionally, component of the F(0) channel, it forms part of the peripheral stalk, linking F(1) to F(0). This chain is ATP synthase subunit b, chloroplastic, found in Guillardia theta (Cryptophyte).